Reading from the N-terminus, the 64-residue chain is Cytochrome b-c1 complex subunit 9 (64 aa).

Residues 2-18 lie on the Mitochondrial matrix side of the membrane; it reads SSPTIPSRLYSLLFRRT. Residues 19 to 43 form a helical membrane-spanning segment; that stretch reads STFALTIAVGALFFERAFDQGADAI. Residues 44–63 are Mitochondrial intermembrane-facing; the sequence is YEHINEGKLWKHIKHKYENK.

The protein belongs to the UQCR10/QCR9 family. Component of the ubiquinol-cytochrome c oxidoreductase (cytochrome b-c1 complex, complex III, CIII), a multisubunit enzyme composed of 11 subunits. The complex is composed of 3 respiratory subunits cytochrome b, cytochrome c1 and Rieske protein UQCRFS1, 2 core protein subunits UQCRC1/QCR1 and UQCRC2/QCR2, and 6 low-molecular weight protein subunits UQCRH/QCR6, UQCRB/QCR7, UQCRQ/QCR8, UQCR10/QCR9, UQCR11/QCR10 and subunit 9, the cleavage product of Rieske protein UQCRFS1. The complex exists as an obligatory dimer and forms supercomplexes (SCs) in the inner mitochondrial membrane with NADH-ubiquinone oxidoreductase (complex I, CI) and cytochrome c oxidase (complex IV, CIV), resulting in different assemblies (supercomplex SCI(1)III(2)IV(1) and megacomplex MCI(2)III(2)IV(2)). Interacts with STMP1.

It is found in the mitochondrion inner membrane. Component of the ubiquinol-cytochrome c oxidoreductase, a multisubunit transmembrane complex that is part of the mitochondrial electron transport chain which drives oxidative phosphorylation. The respiratory chain contains 3 multisubunit complexes succinate dehydrogenase (complex II, CII), ubiquinol-cytochrome c oxidoreductase (cytochrome b-c1 complex, complex III, CIII) and cytochrome c oxidase (complex IV, CIV), that cooperate to transfer electrons derived from NADH and succinate to molecular oxygen, creating an electrochemical gradient over the inner membrane that drives transmembrane transport and the ATP synthase. The cytochrome b-c1 complex catalyzes electron transfer from ubiquinol to cytochrome c, linking this redox reaction to translocation of protons across the mitochondrial inner membrane, with protons being carried across the membrane as hydrogens on the quinol. In the process called Q cycle, 2 protons are consumed from the matrix, 4 protons are released into the intermembrane space and 2 electrons are passed to cytochrome c. This Mus musculus (Mouse) protein is Cytochrome b-c1 complex subunit 9 (Uqcr10).